Here is a 904-residue protein sequence, read N- to C-terminus: Structural polyprotein (904 aa).

3 disordered regions span residues 1–27 (ADQE…VETE), 35–54 (VETP…SARS), and 320–348 (NNSN…KIGP). The span at 39-53 (NRINTPMAQDTSSAR) shows a compositional bias: polar residues. The span at 329–343 (VKEKTKNIPKPKTEN) shows a compositional bias: basic and acidic residues.

This sequence belongs to the picornaviruses polyprotein family. Post-translationally, specific enzymatic cleavages in vivo yield mature proteins.

It localises to the virion. The protein resides in the host cytoplasm. Functionally, structural polyprotein: precursor of all the viral capsid proteins. Its function is as follows. Forms, together with protein VP2 and protein VP3, an icosahedral capsid protecting the viral RNA genome. The icosahedral capsid has a pseudo-T=3 symmetry with a diameter of approximately 300 Angstroms, and is composed of 60 copies of each capsid proteins. Forms, together with protein VP1 and protein VP3, an icosahedral capsid protecting the viral RNA genome. The icosahedral capsid has a pseudo-T=3 symmetry with a diameter of approximately 300 Angstroms, and is composed of 60 copies of each capsid proteins. In terms of biological role, forms, together with protein VP1 and protein VP2, an icosahedral capsid protecting the viral RNA genome. The icosahedral capsid has a pseudo-T=3 symmetry with a diameter of approximately 300 Angstroms, and is composed of 60 copies of each capsid proteins. The chain is Structural polyprotein from Apis mellifera (Honeybee).